The following is an 881-amino-acid chain: Valine--tRNA ligase (881 aa).

The 'HIGH' region motif lies at 76-86 (PTVSGSLHIGH). Positions 493 to 526 (DSPILPDESQLPVDPSSQAPEGYTEDQRGKPGGF) are disordered. The 'KMSKS' region signature appears at 608-612 (KMSKS). ATP is bound at residue Lys-611.

This sequence belongs to the class-I aminoacyl-tRNA synthetase family. ValS type 2 subfamily. As to quaternary structure, monomer.

Its subcellular location is the cytoplasm. The enzyme catalyses tRNA(Val) + L-valine + ATP = L-valyl-tRNA(Val) + AMP + diphosphate. In terms of biological role, catalyzes the attachment of valine to tRNA(Val). As ValRS can inadvertently accommodate and process structurally similar amino acids such as threonine, to avoid such errors, it has a 'posttransfer' editing activity that hydrolyzes mischarged Thr-tRNA(Val) in a tRNA-dependent manner. This Thermobifida fusca (strain YX) protein is Valine--tRNA ligase.